Reading from the N-terminus, the 172-residue chain is MSTKAIEIKQQKADVITEQLKNSVSTIIVDYRGLTVAQVTELRKQLREAGVEFKVYKNTLVRRSAAAAGIEGIDEFLTGPNAIAFSTEEVVAPAKIIADFAKENEALEIKAGIIEGTVTSAEDVKAIASLPSKEGLISMVLSVLQAPIRNFAYAVKAVGEQQGGEETAAEEA.

This sequence belongs to the universal ribosomal protein uL10 family. As to quaternary structure, part of the ribosomal stalk of the 50S ribosomal subunit. The N-terminus interacts with L11 and the large rRNA to form the base of the stalk. The C-terminus forms an elongated spine to which L12 dimers bind in a sequential fashion forming a multimeric L10(L12)X complex.

In terms of biological role, forms part of the ribosomal stalk, playing a central role in the interaction of the ribosome with GTP-bound translation factors. The polypeptide is Large ribosomal subunit protein uL10 (Macrococcus caseolyticus (strain JCSC5402) (Macrococcoides caseolyticum)).